The following is a 389-amino-acid chain: Formate-dependent phosphoribosylglycinamide formyltransferase (389 aa).

N(1)-(5-phospho-beta-D-ribosyl)glycinamide contacts are provided by residues E12–L13 and E72. ATP-binding positions include R104, K145, S150–Q155, E185–I188, and E193. In terms of domain architecture, ATP-grasp spans D109–L301. 2 residues coordinate Mg(2+): E258 and E271. Residues D278, K350, and R357–R358 each bind N(1)-(5-phospho-beta-D-ribosyl)glycinamide.

This sequence belongs to the PurK/PurT family. As to quaternary structure, homodimer.

It catalyses the reaction N(1)-(5-phospho-beta-D-ribosyl)glycinamide + formate + ATP = N(2)-formyl-N(1)-(5-phospho-beta-D-ribosyl)glycinamide + ADP + phosphate + H(+). The protein operates within purine metabolism; IMP biosynthesis via de novo pathway; N(2)-formyl-N(1)-(5-phospho-D-ribosyl)glycinamide from N(1)-(5-phospho-D-ribosyl)glycinamide (formate route): step 1/1. In terms of biological role, involved in the de novo purine biosynthesis. Catalyzes the transfer of formate to 5-phospho-ribosyl-glycinamide (GAR), producing 5-phospho-ribosyl-N-formylglycinamide (FGAR). Formate is provided by PurU via hydrolysis of 10-formyl-tetrahydrofolate. The polypeptide is Formate-dependent phosphoribosylglycinamide formyltransferase (Phocaeicola vulgatus (strain ATCC 8482 / DSM 1447 / JCM 5826 / CCUG 4940 / NBRC 14291 / NCTC 11154) (Bacteroides vulgatus)).